A 409-amino-acid polypeptide reads, in one-letter code: CUB domain-containing protein (409 aa).

Positions 1-18 (MFLFSLTVLSALVLITES) are cleaved as a signal peptide. Over residues 154–229 (TEASTTAQET…TTAPTTAPAP (76 aa)) the composition is skewed to low complexity. The segment at 154 to 230 (TEASTTAQET…TAPTTAPAPI (77 aa)) is disordered. The cysteines at positions 232 and 257 are disulfide-linked. One can recognise a CUB domain in the interval 232–338 (CGGVLRGRGT…QEYVDYYYYD (107 aa)). The interval 389–409 (VQGAADSESEASASSESSDED) is disordered. Residues 392–409 (AADSESEASASSESSDED) are compositionally biased toward low complexity.

Component of the acid-insoluble and acid-soluble organic matrix of the aragonitic skeleton (at protein level).

It localises to the secreted. This is CUB domain-containing protein from Acropora millepora (Staghorn coral).